The following is a 309-amino-acid chain: Calponin-2 (309 aa).

Residue Ser2 is modified to N-acetylserine. N6-acetyllysine occurs at positions 8 and 25. The region spanning 28–132 is the Calponin-homology (CH) domain; that stretch reads PQKEAELRSW…SLLALAGKAK (105 aa). Ser138 carries the phosphoserine modification. 3 Calponin-like repeats span residues 166–191, 206–231, and 245–269; these read IGLQMGTNKCASQSGMTAYGTRRHLY, ISLQMGTNKCASQVGMTAPGTRRHIY, and MSLQMGYTQGANQSGQVFGLGRQIY. The disordered stretch occupies residues 273 to 309; that stretch reads YCPQGPAADGAPAAAGDGPGPGEPSECPPYYQEEAGY. A compositionally biased stretch (low complexity) spans 277–288; that stretch reads GPAADGAPAAAG.

The protein belongs to the calponin family.

Functionally, thin filament-associated protein that is implicated in the regulation and modulation of smooth muscle contraction. It is capable of binding to actin, calmodulin and tropomyosin. The interaction of calponin with actin inhibits the actomyosin Mg-ATPase activity. This is Calponin-2 (CNN2) from Bos taurus (Bovine).